We begin with the raw amino-acid sequence, 177 residues long: Large ribosomal subunit protein uL6 (177 aa).

It belongs to the universal ribosomal protein uL6 family. In terms of assembly, part of the 50S ribosomal subunit.

This protein binds to the 23S rRNA, and is important in its secondary structure. It is located near the subunit interface in the base of the L7/L12 stalk, and near the tRNA binding site of the peptidyltransferase center. This chain is Large ribosomal subunit protein uL6, found in Pseudoalteromonas atlantica (strain T6c / ATCC BAA-1087).